The following is a 224-amino-acid chain: Claudin-19 (224 aa).

At 1–7 (MANSGLQ) the chain is on the cytoplasmic side. Residues 8 to 28 (LLGYFLALGGWVGIIASTALP) form a helical membrane-spanning segment. Residues 29–81 (QWKQSSYAGDAIITAVGLYEGLWMSCASQSTGQVQCKLYDSLLALDGHIQSAR) are Extracellular-facing. Cysteines 54 and 64 form a disulfide. Residues 82 to 102 (ALMVVAVLLGFVAMVLSVVGM) traverse the membrane as a helical segment. Over 103-117 (KCTRVGDSNPIAKGR) the chain is Cytoplasmic. The helical transmembrane segment at 118 to 138 (VAIAGGALFILAGLCTLTAVS) threads the bilayer. At 139 to 160 (WYATLVTQEFFNPSTPVNARYE) the chain is on the extracellular side. A helical transmembrane segment spans residues 161-181 (FGPALFVGWASAGLAVLGGSF). At 182–224 (LCCTCPEPERPNSSPQPYRPGPSAAAREPVVKLPASAKGPLGV) the chain is on the cytoplasmic side. A disordered region spans residues 191–224 (RPNSSPQPYRPGPSAAAREPVVKLPASAKGPLGV).

This sequence belongs to the claudin family. Can form homo- and heteropolymeric tight junction strands. Interacts with other claudins including CLDN3, CLDN10, CLDN16 and CLDN18 with highest affinity for CLDN16. Interacts (via PDZ-binding motif TRV) with TJP1 (via PDZ domain).

The protein resides in the cell junction. The protein localises to the tight junction. Its subcellular location is the cell membrane. It catalyses the reaction Mg(2+)(in) = Mg(2+)(out). It carries out the reaction Ca(2+)(in) = Ca(2+)(out). The enzyme catalyses Na(+)(in) = Na(+)(out). The catalysed reaction is K(+)(in) = K(+)(out). It catalyses the reaction Rb(+)(in) = Rb(+)(out). It carries out the reaction Cs(+)(in) = Cs(+)(out). The enzyme catalyses Li(+)(in) = Li(+)(out). Functionally, forms paracellular channels: coassembles with CLDN16 into tight junction strands with cation-selective channels through the strands, conveying epithelial permeability in a process known as paracellular tight junction permeability. Involved in the maintenance of ion gradients along the nephron. In the thick ascending limb (TAL) of Henle's loop, facilitates sodium paracellular permeability from the interstitial compartment to the lumen, contributing to the lumen-positive transepithelial potential that drives paracellular magnesium and calcium reabsorption. Forms paracellular barriers on its own. In the peripheral nervous system, represents a major constituent of the tight junctions in Schwann cells and contributes to electrical sealing. During retinal neurogenesis, may regulate the barrier properties of tight junctions in retinal pigment epithelium, required for proper retinal tissue differentiation and vision. The chain is Claudin-19 from Homo sapiens (Human).